Consider the following 222-residue polypeptide: Deoxyribose-phosphate aldolase (222 aa).

Asp-89 acts as the Proton donor/acceptor in catalysis. Lys-152 functions as the Schiff-base intermediate with acetaldehyde in the catalytic mechanism. Catalysis depends on Lys-181, which acts as the Proton donor/acceptor.

This sequence belongs to the DeoC/FbaB aldolase family. DeoC type 1 subfamily.

Its subcellular location is the cytoplasm. It carries out the reaction 2-deoxy-D-ribose 5-phosphate = D-glyceraldehyde 3-phosphate + acetaldehyde. Its pathway is carbohydrate degradation; 2-deoxy-D-ribose 1-phosphate degradation; D-glyceraldehyde 3-phosphate and acetaldehyde from 2-deoxy-alpha-D-ribose 1-phosphate: step 2/2. In terms of biological role, catalyzes a reversible aldol reaction between acetaldehyde and D-glyceraldehyde 3-phosphate to generate 2-deoxy-D-ribose 5-phosphate. This Alkaliphilus oremlandii (strain OhILAs) (Clostridium oremlandii (strain OhILAs)) protein is Deoxyribose-phosphate aldolase.